Consider the following 376-residue polypeptide: Succinyl-diaminopimelate desuccinylase (376 aa).

H66 contacts Zn(2+). Residue D68 is part of the active site. D99 lines the Zn(2+) pocket. Residue E133 is the Proton acceptor of the active site. E134, E162, and H348 together coordinate Zn(2+).

This sequence belongs to the peptidase M20A family. DapE subfamily. In terms of assembly, homodimer. Zn(2+) is required as a cofactor. The cofactor is Co(2+).

The enzyme catalyses N-succinyl-(2S,6S)-2,6-diaminopimelate + H2O = (2S,6S)-2,6-diaminopimelate + succinate. The protein operates within amino-acid biosynthesis; L-lysine biosynthesis via DAP pathway; LL-2,6-diaminopimelate from (S)-tetrahydrodipicolinate (succinylase route): step 3/3. Functionally, catalyzes the hydrolysis of N-succinyl-L,L-diaminopimelic acid (SDAP), forming succinate and LL-2,6-diaminopimelate (DAP), an intermediate involved in the bacterial biosynthesis of lysine and meso-diaminopimelic acid, an essential component of bacterial cell walls. In Nitrosococcus oceani (strain ATCC 19707 / BCRC 17464 / JCM 30415 / NCIMB 11848 / C-107), this protein is Succinyl-diaminopimelate desuccinylase.